Reading from the N-terminus, the 503-residue chain is Protein ERGIC-53-like (503 aa).

A signal peptide spans 1–25 (MLKTGGLSPSLCLLSLLLALHSAER). Topologically, residues 26 to 439 (SYPPPQRRFE…WLPGFSTCLR (414 aa)) are lumenal. In terms of domain architecture, L-type lectin-like spans 32–253 (RRFEYKLSFK…DVLSFLTFSL (222 aa)). The cysteines at positions 177 and 216 are disulfide-linked. A helical transmembrane segment spans residues 440 to 460 (TSIFLFFLLIQTVGFFCYMNF). Over 461-503 (RQELDKRLQEYLFTESISLQPALPIPRTIGVLRRQPVSPSMQA) the chain is Cytoplasmic.

In terms of tissue distribution, predominantly expressed in the sublingual salivary gland, in the mucous cells of the acini, but not in the serous cells, nor in the duct system (at protein level). Not detected in the submandilar, nor the parotid glands. Expressed in the mucous glands, but not detected in the serous glands (at protein level). Besides the salivary glands, expressed in the Brunner's glands in the duodenum, but no other mucous or serous glands (at protein level).

The protein resides in the endoplasmic reticulum-Golgi intermediate compartment membrane. In Rattus norvegicus (Rat), this protein is Protein ERGIC-53-like (Lman1l).